The chain runs to 511 residues: L-arabinose isomerase (511 aa).

Positions 316, 343, 360, and 459 each coordinate Mn(2+).

Belongs to the arabinose isomerase family. Mn(2+) serves as cofactor.

The catalysed reaction is beta-L-arabinopyranose = L-ribulose. Its pathway is carbohydrate degradation; L-arabinose degradation via L-ribulose; D-xylulose 5-phosphate from L-arabinose (bacterial route): step 1/3. Functionally, catalyzes the conversion of L-arabinose to L-ribulose. This Arthrobacter sp. (strain FB24) protein is L-arabinose isomerase.